The chain runs to 345 residues: Dihydroorotate dehydrogenase (quinone) (345 aa).

FMN contacts are provided by residues 65–69 (AGLDK) and Thr89. Residue Lys69 coordinates substrate. Residue 114–118 (NRMGF) participates in substrate binding. The FMN site is built by Asn142 and Asn175. A substrate-binding site is contributed by Asn175. The active-site Nucleophile is Ser178. Position 180 (Asn180) interacts with substrate. Residues Lys220 and Thr248 each coordinate FMN. 249-250 (NT) is a substrate binding site. FMN is bound by residues Gly271, Gly300, and 321–322 (YT).

The protein belongs to the dihydroorotate dehydrogenase family. Type 2 subfamily. As to quaternary structure, monomer. FMN is required as a cofactor.

It localises to the cell membrane. It catalyses the reaction (S)-dihydroorotate + a quinone = orotate + a quinol. It participates in pyrimidine metabolism; UMP biosynthesis via de novo pathway; orotate from (S)-dihydroorotate (quinone route): step 1/1. Catalyzes the conversion of dihydroorotate to orotate with quinone as electron acceptor. This chain is Dihydroorotate dehydrogenase (quinone), found in Burkholderia mallei (strain NCTC 10247).